Here is a 249-residue protein sequence, read N- to C-terminus: Probable transcriptional regulatory protein Rru_A1086 (249 aa).

The protein belongs to the TACO1 family.

The protein localises to the cytoplasm. The protein is Probable transcriptional regulatory protein Rru_A1086 of Rhodospirillum rubrum (strain ATCC 11170 / ATH 1.1.1 / DSM 467 / LMG 4362 / NCIMB 8255 / S1).